The following is a 501-amino-acid chain: Ribulose bisphosphate carboxylase large chain (501 aa).

2 residues coordinate substrate: Asn-141 and Thr-191. Lys-193 (proton acceptor) is an active-site residue. Lys-195 contacts substrate. 3 residues coordinate Mg(2+): Lys-219, Asp-221, and Glu-222. Lys-219 is modified (N6-carboxylysine). His-311 serves as the catalytic Proton acceptor. Substrate contacts are provided by Arg-312, His-344, and Ser-396.

This sequence belongs to the RuBisCO large chain family. Type I subfamily. Heterohexadecamer of 8 large chains and 8 small chains. Mg(2+) is required as a cofactor.

It carries out the reaction 2 (2R)-3-phosphoglycerate + 2 H(+) = D-ribulose 1,5-bisphosphate + CO2 + H2O. The catalysed reaction is D-ribulose 1,5-bisphosphate + O2 = 2-phosphoglycolate + (2R)-3-phosphoglycerate + 2 H(+). RuBisCO catalyzes two reactions: the carboxylation of D-ribulose 1,5-bisphosphate, the primary event in carbon dioxide fixation, as well as the oxidative fragmentation of the pentose substrate. Both reactions occur simultaneously and in competition at the same active site. The polypeptide is Ribulose bisphosphate carboxylase large chain (Paraburkholderia phymatum (strain DSM 17167 / CIP 108236 / LMG 21445 / STM815) (Burkholderia phymatum)).